The chain runs to 858 residues: Alanine--tRNA ligase (858 aa).

Residues His-550, His-554, Cys-652, and His-656 each coordinate Zn(2+).

It belongs to the class-II aminoacyl-tRNA synthetase family. The cofactor is Zn(2+).

The protein resides in the cytoplasm. It carries out the reaction tRNA(Ala) + L-alanine + ATP = L-alanyl-tRNA(Ala) + AMP + diphosphate. In terms of biological role, catalyzes the attachment of alanine to tRNA(Ala) in a two-step reaction: alanine is first activated by ATP to form Ala-AMP and then transferred to the acceptor end of tRNA(Ala). Also edits incorrectly charged Ser-tRNA(Ala) and Gly-tRNA(Ala) via its editing domain. This chain is Alanine--tRNA ligase, found in Pseudothermotoga lettingae (strain ATCC BAA-301 / DSM 14385 / NBRC 107922 / TMO) (Thermotoga lettingae).